The primary structure comprises 314 residues: Serine/threonine-protein phosphatase SIT4 (314 aa).

Mn(2+) is bound by residues Asp53, His55, Asp85, and Asn117. Residue His118 is the Proton donor of the active site. 2 residues coordinate Mn(2+): His167 and His241.

The protein belongs to the PPP phosphatase family. PP-6 (PP-V) subfamily. Interacts with MDS3. Mn(2+) is required as a cofactor.

It localises to the cytoplasm. It catalyses the reaction O-phospho-L-seryl-[protein] + H2O = L-seryl-[protein] + phosphate. The enzyme catalyses O-phospho-L-threonyl-[protein] + H2O = L-threonyl-[protein] + phosphate. Functionally, serine/threonine protein phosphatase which is involved in the dephosphorylation of the large subunit of RNA polymerase II. Is required in late G1 for normal G1 cyclin expression, bud initiation and expression of certain genes that are periodically expressed during late G1. Plays a role during hyphal growth through the regulation of cell wall biogenesis, osmosensing and protein translation. Involved in virulence in a mouse systemic infection model. The chain is Serine/threonine-protein phosphatase SIT4 (SIT4) from Candida albicans (strain SC5314 / ATCC MYA-2876) (Yeast).